Reading from the N-terminus, the 949-residue chain is MASAFKGILIRSPPDVCAETVAKVSQCNRAQLVKNSSTGFKNIFKLSEARKFHAPVASHLRSQAVMAPASDPTSTAIKRVFTFGKGRSEGNKGMKSLLGGKGANLAEMASIGLSVPPGLTISTEACQEYQEHGKQLSAGLWEEILEGLRVIEKDMGSYLGDPSKPLLLSVRSGAAISMPGMMDTVLNLGLNDDVVAGLAAKSGERFAYDSYRRFLDMFGNVVMGISHSSFEEKLEKLKQAKGVKLDTELTASDLKEVVEQYKNVYLEVKGEKFPADPERQLQLAIQAVFDSWDSPRAIKYRNINQITGLKGTAVNIQCMVFGNMGNTSGTGVLFTRNPSTGEKKLYGEFLINAQGEDVVAGIRTPEDLDTMRSCMPEAYKELVENCEILERHYKDMMDIEFTVQENRLWMLQCRSGKRTGKGAVKIAVDLVKEGIVDTYTAIKMVEPQHLDQLLHPQFEDPSAYKDRVIATGLPASPGAAVGQIIFSADEAESWQAQGKSVILVRNETSPEDVGGMHAAIGILTARGGMTSHAAVVAGGWGKCCVSGCSEIRVNDTDKVLLVGDKVISEGDWLSLNGSTGEVILGKVPLSPPALSGDLETFMSWADDIRVLKVMANADTPEDALAARNNGAEGIGLCRTEHMFFASDDRIKTVRKMIMAVTSEQRKVALDQLLPYQRSDFEGIFRAMDGLPVTIRLLDPPLHEFLPEGDVEQIVSELTLETGMAEDEIFSRIEKLSEVNPMLGFRGCRLGISYPELTEMQARAIFQAAVSMSNQGVKVFPEIMVPLVGTPQELGHQVSLIRNVAEKVFSETGSSLSYKVGTMIEIPRAALVADEIAMEAEFFSFGTNDLTQMTFGYSRDDVGKFLPVYLSKGILQSDPFEVLDQKGVGQLIKLATEKGRSARPSLKVGICGEHGGEPSSVAFFAEAGLDYVSCSPFRVPIARLAAAQVV.

Residues 1–74 (MASAFKGILI…VMAPASDPTS (74 aa)) constitute a chloroplast transit peptide. Phosphothreonine; by PDRP1 is present on T530. H532 functions as the Tele-phosphohistidine intermediate in the catalytic mechanism. 7 residues coordinate substrate: R638, R695, E824, G845, T846, N847, and D848. Residue E824 coordinates Mg(2+). Residue D848 coordinates Mg(2+). The active-site Proton donor is C910.

Belongs to the PEP-utilizing enzyme family. As to quaternary structure, homodimer. Mg(2+) is required as a cofactor. Post-translationally, phosphorylation of Thr-530 in the dark inactivates the enzyme. Dephosphorylation upon light stimulation reactivates the enzyme.

The protein resides in the plastid. The protein localises to the chloroplast. It catalyses the reaction pyruvate + phosphate + ATP = phosphoenolpyruvate + AMP + diphosphate + H(+). Its activity is regulated as follows. Activated by light-induced dephosphorylation. Inhibited by dark-induced phosphorylation. Both reactions are catalyzed by PDRP1. Formation of phosphoenolpyruvate, which is the primary acceptor of CO(2) in C4 and some Crassulacean acid metabolism plants. In Mesembryanthemum crystallinum (Common ice plant), this protein is Pyruvate, phosphate dikinase, chloroplastic (PPD).